We begin with the raw amino-acid sequence, 169 residues long: Cell division inhibitor SulA (169 aa).

The segment covering 1–15 (MFTSAHANRSAQASA) has biased composition (polar residues). A disordered region spans residues 1–22 (MFTSAHANRSAQASASAGHYAH). The tract at residues 106 to 112 (ALRTGNY) is ftsZ binding. The segment at 162–169 (KIHSNLYH) is lon protease binding.

This sequence belongs to the SulA family. Interacts with FtsZ. Is rapidly cleaved and degraded by the Lon protease once DNA damage is repaired.

In terms of biological role, component of the SOS system and an inhibitor of cell division. Accumulation of SulA causes rapid cessation of cell division and the appearance of long, non-septate filaments. In the presence of GTP, binds a polymerization-competent form of FtsZ in a 1:1 ratio, thus inhibiting FtsZ polymerization and therefore preventing it from participating in the assembly of the Z ring. This mechanism prevents the premature segregation of damaged DNA to daughter cells during cell division. This is Cell division inhibitor SulA from Klebsiella pneumoniae (strain 342).